Consider the following 262-residue polypeptide: Nodulation protein J (262 aa).

The ABC transmembrane type-2 domain maps to 33–259; that stretch reads ASILGNLAEP…FLSVGLLQRR (227 aa). 6 helical membrane passes run 35 to 55, 62 to 82, 125 to 145, 147 to 167, 177 to 197, and 236 to 256; these read ILGNLAEPVTSLFGLGFGLGA, GIPYVAFLAAGMVATSAMISA, ALLAGTAMMLVAATMGFASWP, VLFALPVIALTGFAFASLAMI, YFIFYQTLFLTPMLFLSGAVF, and LHISALCIFAVMPFFLSVGLL.

This sequence belongs to the ABC-2 integral membrane protein family. Lipooligosaccharide exporter (TC 3.A.1.102) subfamily. The complex is composed of two ATP-binding proteins (NodI) and two transmembrane proteins (NodJ).

It localises to the cell inner membrane. Its function is as follows. Part of the ABC transporter complex NodIJ involved in the export of the nodulation factors (Nod factors), the bacterial signal molecules that induce symbiosis and subsequent nodulation induction. Nod factors are LCO (lipo-chitin oligosaccharide), a modified beta-1,4-linked N-acetylglucosamine oligosaccharide. This subunit encodes the transporter. This is Nodulation protein J (nodJ) from Sinorhizobium fredii (strain NBRC 101917 / NGR234).